Reading from the N-terminus, the 469-residue chain is Deoxyribodipyrimidine photo-lyase (469 aa).

Residues 1–133 (MRLVWFRRDL…IWSAFDDKCV (133 aa)) form the Photolyase/cryptochrome alpha/beta domain. A (6R)-5,10-methylene-5,6,7,8-tetrahydrofolate-binding site is contributed by Glu-107.

This sequence belongs to the DNA photolyase class-1 family. As to quaternary structure, monomer. FAD is required as a cofactor. (6R)-5,10-methylene-5,6,7,8-tetrahydrofolate serves as cofactor.

The catalysed reaction is cyclobutadipyrimidine (in DNA) = 2 pyrimidine residues (in DNA).. Functionally, involved in repair of UV radiation-induced DNA damage. Catalyzes the light-dependent monomerization (300-600 nm) of cyclobutyl pyrimidine dimers (in cis-syn configuration), which are formed between adjacent bases on the same DNA strand upon exposure to ultraviolet radiation. The protein is Deoxyribodipyrimidine photo-lyase (phrA) of Vibrio cholerae serotype O1 (strain ATCC 39315 / El Tor Inaba N16961).